The sequence spans 267 residues: Phosphoinositide-3-kinase-interacting protein 1 (267 aa).

Residues 1–21 (MLLAWVHTFLLSNMLLAEAYG) form the signal peptide. The Extracellular segment spans residues 22 to 172 (SGGCFWDNGH…NSKEKKDLGT (151 aa)). Residues 24 to 101 (GCFWDNGHLY…EKRPCEDLRC (78 aa)) enclose the Kringle domain. Intrachain disulfides connect Cys25-Cys101, Cys46-Cys82, and Cys70-Cys96. Residues 91–101 (PEKRPCEDLRC) show a composition bias toward basic and acidic residues. The disordered stretch occupies residues 91 to 122 (PEKRPCEDLRCPETTSQAPPPPPPSSTTELEE). A helical transmembrane segment spans residues 173 to 193 (LGYVLGVTMTVIIIAIGVGIV). Residues 194–267 (LGYTYKRGKD…LTDQAGTPGA (74 aa)) lie on the Cytoplasmic side of the membrane.

It is found in the cell membrane. In terms of biological role, negative regulator of hepatic phosphatidylinositol 3-kinase (PI3K) activity. The protein is Phosphoinositide-3-kinase-interacting protein 1 (Pik3ip1) of Rattus norvegicus (Rat).